Here is a 274-residue protein sequence, read N- to C-terminus: Ribose-5-phosphate isomerase (274 aa).

It belongs to the ribose 5-phosphate isomerase family.

It localises to the cytoplasm. It catalyses the reaction aldehydo-D-ribose 5-phosphate = D-ribulose 5-phosphate. The protein operates within carbohydrate degradation; pentose phosphate pathway; D-ribose 5-phosphate from D-ribulose 5-phosphate (non-oxidative stage): step 1/1. The protein is Ribose-5-phosphate isomerase (RKI1) of Kluyveromyces lactis (strain ATCC 8585 / CBS 2359 / DSM 70799 / NBRC 1267 / NRRL Y-1140 / WM37) (Yeast).